Reading from the N-terminus, the 590-residue chain is Auxin response factor 20 (590 aa).

The segment at residues 126-224 (FTKVLTASDT…ELRVGIRRAR (99 aa)) is a DNA-binding region (TF-B3). Residues 495 to 576 (RTCTKVQMQG…MVKKILIYSK (82 aa)) form the PB1 domain.

Belongs to the ARF family. In terms of assembly, homodimers and heterodimers.

The protein localises to the nucleus. In terms of biological role, auxin response factors (ARFs) are transcriptional factors that bind specifically to the DNA sequence 5'-TGTCTC-3' found in the auxin-responsive promoter elements (AuxREs). Could act as transcriptional activator or repressor. Formation of heterodimers with Aux/IAA proteins may alter their ability to modulate early auxin response genes expression. The sequence is that of Auxin response factor 20 (ARF20) from Arabidopsis thaliana (Mouse-ear cress).